Consider the following 122-residue polypeptide: uncharacterized protein (122 aa).

This is an uncharacterized protein from Bacillus subtilis (strain 168).